Reading from the N-terminus, the 610-residue chain is DEAD-box ATP-dependent RNA helicase 9, mitochondrial (610 aa).

Residues 1-66 (MISTVLRRSI…SSPFGVKVRD (66 aa)) constitute a mitochondrion transit peptide. A Q motif motif is present at residues 116-144 (LAIADLGISPEIVKALKGRGIEKLFPIQK). Residues 147–321 (LEPAMEGRDM…KKYLNNPLTI (175 aa)) enclose the Helicase ATP-binding domain. 160–167 (ARTGTGKT) contacts ATP. A DEAD box motif is present at residues 269-272 (DEAD). Residues 350 to 494 (IIGPLVKEHG…ELPSIAVERG (145 aa)) enclose the Helicase C-terminal domain. The span at 542–557 (SGRSGGGGGSYGGSGG) shows a compositional bias: gly residues. Residues 542 to 610 (SGRSGGGGGS…FGSNDGKRSY (69 aa)) form a disordered region. Low complexity predominate over residues 558-572 (SSSRYSGGSDRSSGF). The span at 573-585 (GSFGSGGSSGGFG) shows a compositional bias: gly residues. The segment covering 586–596 (SDRSSQSSGRS) has biased composition (low complexity).

The protein belongs to the DEAD box helicase family. DDX21/DDX50 subfamily.

Its subcellular location is the mitochondrion. The enzyme catalyses ATP + H2O = ADP + phosphate + H(+). The sequence is that of DEAD-box ATP-dependent RNA helicase 9, mitochondrial (RH9) from Arabidopsis thaliana (Mouse-ear cress).